The sequence spans 183 residues: dTTP/UTP pyrophosphatase (183 aa).

Asp64 serves as the catalytic Proton acceptor.

The protein belongs to the Maf family. YhdE subfamily. It depends on a divalent metal cation as a cofactor.

The protein resides in the cytoplasm. It carries out the reaction dTTP + H2O = dTMP + diphosphate + H(+). The enzyme catalyses UTP + H2O = UMP + diphosphate + H(+). Nucleoside triphosphate pyrophosphatase that hydrolyzes dTTP and UTP. May have a dual role in cell division arrest and in preventing the incorporation of modified nucleotides into cellular nucleic acids. The polypeptide is dTTP/UTP pyrophosphatase (Acinetobacter baylyi (strain ATCC 33305 / BD413 / ADP1)).